Here is a 407-residue protein sequence, read N- to C-terminus: Protein NIS1 (407 aa).

Positions 41–61 (SNSNSNSNTNSNTNSNTNSNS) are enriched in low complexity. The segment at 41 to 64 (SNSNSNSNTNSNTNSNTNSNSDTK) is disordered. Phosphoserine occurs at positions 260, 264, 300, and 302. Over residues 277 to 302 (IKQNSTTPTTRSVYNKNVGRSNTSPS) the composition is skewed to polar residues. The interval 277-315 (IKQNSTTPTTRSVYNKNVGRSNTSPSVLYHPKRRGKLNT) is disordered. The segment covering 306 to 315 (HPKRRGKLNT) has biased composition (basic residues). Positions 391 to 398 (IIIPDSQD) match the SUMO-binding motif.

Interacts with CBF2, GIS1, NAP1, PRM8, REI1, SHS1 and SMT3.

The protein resides in the bud neck. The protein localises to the cytoplasm. It is found in the cell cortex. May be involved in a mitotic signaling network. Binds sumoylated proteins and may stabilize SUMO chains. This chain is Protein NIS1 (NIS1), found in Saccharomyces cerevisiae (strain ATCC 204508 / S288c) (Baker's yeast).